The sequence spans 229 residues: Potassium/proton antiporter CemA (229 aa).

4 helical membrane-spanning segments follow: residues 7–27 (FNPLLYLTSIVFLSWSISFSF), 107–127 (ILNFLTNIISFAILSVFYILG), 154–174 (ILLLTDLCIGFHSPHGWELMI), and 189–209 (IISGLVSTFPVILDTIFKYLI).

It belongs to the CemA family.

It is found in the plastid. Its subcellular location is the chloroplast inner membrane. It carries out the reaction K(+)(in) + H(+)(out) = K(+)(out) + H(+)(in). Contributes to K(+)/H(+) antiport activity by supporting proton efflux to control proton extrusion and homeostasis in chloroplasts in a light-dependent manner to modulate photosynthesis. Prevents excessive induction of non-photochemical quenching (NPQ) under continuous-light conditions. Indirectly promotes efficient inorganic carbon uptake into chloroplasts. The sequence is that of Potassium/proton antiporter CemA from Ranunculus macranthus (Large buttercup).